Here is a 698-residue protein sequence, read N- to C-terminus: Capon-like protein (698 aa).

The PID domain occupies 25-194 (FFHGITFQAK…SELLDVEQIS (170 aa)). The segment at 191–240 (EQISEQQLSEDGERGGGDNETPKKEHLAITPDLNHTQPQRPNHLDIMPSH) is disordered. The span at 201-217 (DGERGGGDNETPKKEHL) shows a compositional bias: basic and acidic residues. Coiled coils occupy residues 265 to 327 (RSEI…LASL), 379 to 484 (NQQL…LNAN), and 554 to 583 (LNEDIRLSIEQNLNNLEEQLKAAVSNGNLA). The span at 396-423 (SQHLQNLQQQQQQQQQQQQQQTQAAPTA) shows a compositional bias: low complexity. Residues 396 to 460 (SQHLQNLQQQ…QQQQQQQQDA (65 aa)) are disordered. Polar residues predominate over residues 436 to 447 (YPSMSALQSISN). Positions 448 to 458 (QLQQQQQQQQQ) are enriched in low complexity. A disordered region spans residues 588-698 (GGSTSTRDTS…RTTWARHTTK (111 aa)). Residues 590–640 (STSTRDTSRSSSTLDSPSSPRLRSSNNNISPGSSNGNQNHNNNSNSNSSSS) are compositionally biased toward low complexity. Composition is skewed to polar residues over residues 662–672 (LSATPSFITRS) and 679–698 (NRSQMMSQVQRTTWARHTTK).

As to expression, expressed at higher level in wing imaginal disk.

Putative adapter protein. This Drosophila melanogaster (Fruit fly) protein is Capon-like protein.